Here is a 271-residue protein sequence, read N- to C-terminus: Phosphonates import ATP-binding protein PhnC 2 (271 aa).

The 244-residue stretch at 2–245 (LTIDKLTKRF…VARDIYGAGA (244 aa)) folds into the ABC transporter domain. An ATP-binding site is contributed by 34 to 41 (GRSGAGKS).

It belongs to the ABC transporter superfamily. Phosphonates importer (TC 3.A.1.9.1) family. In terms of assembly, the complex is composed of two ATP-binding proteins (PhnC), two transmembrane proteins (PhnE) and a solute-binding protein (PhnD).

The protein localises to the cell inner membrane. It carries out the reaction phosphonate(out) + ATP + H2O = phosphonate(in) + ADP + phosphate + H(+). Part of the ABC transporter complex PhnCDE involved in phosphonates import. Responsible for energy coupling to the transport system. This Roseobacter denitrificans (strain ATCC 33942 / OCh 114) (Erythrobacter sp. (strain OCh 114)) protein is Phosphonates import ATP-binding protein PhnC 2.